The primary structure comprises 426 residues: Serine--tRNA ligase (426 aa).

Residue 227–229 (TSE) coordinates L-serine. ATP is bound by residues 258–260 (RKE) and Val-274. Position 281 (Glu-281) interacts with L-serine. 345 to 348 (ELTS) is a binding site for ATP. Thr-380 is a binding site for L-serine.

The protein belongs to the class-II aminoacyl-tRNA synthetase family. Type-1 seryl-tRNA synthetase subfamily. In terms of assembly, homodimer. The tRNA molecule binds across the dimer.

The protein resides in the cytoplasm. The enzyme catalyses tRNA(Ser) + L-serine + ATP = L-seryl-tRNA(Ser) + AMP + diphosphate + H(+). The catalysed reaction is tRNA(Sec) + L-serine + ATP = L-seryl-tRNA(Sec) + AMP + diphosphate + H(+). It functions in the pathway aminoacyl-tRNA biosynthesis; selenocysteinyl-tRNA(Sec) biosynthesis; L-seryl-tRNA(Sec) from L-serine and tRNA(Sec): step 1/1. Functionally, catalyzes the attachment of serine to tRNA(Ser). Is also able to aminoacylate tRNA(Sec) with serine, to form the misacylated tRNA L-seryl-tRNA(Sec), which will be further converted into selenocysteinyl-tRNA(Sec). This chain is Serine--tRNA ligase, found in Clavibacter sepedonicus (Clavibacter michiganensis subsp. sepedonicus).